The primary structure comprises 170 residues: Transmembrane protein 252 (170 aa).

2 consecutive transmembrane segments (helical) span residues 8–28 (ILCA…AFFI) and 40–60 (LIAA…GIFW). Residues 112-147 (CPAEREASGIPPPLYTETGLEFQDGNDSHPEAPPSY) form a disordered region.

It is found in the membrane. This Pongo abelii (Sumatran orangutan) protein is Transmembrane protein 252 (TMEM252).